A 1037-amino-acid chain; its full sequence is Sentrin-specific protease 7 (1037 aa).

Residues 1–10 are compositionally biased toward basic residues; the sequence is MDRARPGRRR. Disordered regions lie at residues 1–28 and 182–420; these read MDRARPGRRRASSEIVTEGKRKKSSPAD and ASLS…SEEN. 4 positions are modified to phosphoserine: Ser-12, Ser-13, Ser-25, and Ser-189. Composition is skewed to polar residues over residues 182–211 and 253–263; these read ASLSDTASPKSEELSSSADGSLESCQNVNH and TPQSKDFNSGN. The span at 289 to 299 shows a compositional bias: basic residues; it reads VSRKRKKRGRS. Over residues 300–309 the composition is skewed to polar residues; sequence NFHNSHNPKS. Composition is skewed to basic and acidic residues over residues 310–320 and 330–340; these read SVDKSTEYIKE and KLEESNEDSHQ. Low complexity predominate over residues 381-399; that stretch reads NKSSESSVSSEVAENSSAA. Phosphoserine occurs at positions 432 and 433. Residues 747 to 1037 are protease; the sequence is LGVTNEDLEC…HLQQQKGSSS (291 aa). The active site involves His-847. A disordered region spans residues 873 to 910; the sequence is EFQDQQSQHDNKTIDNDPHTTSTVFTSAEESQSTETSM. Over residues 879–890 the composition is skewed to basic and acidic residues; sequence SQHDNKTIDNDP. Over residues 898–910 the composition is skewed to low complexity; the sequence is TSAEESQSTETSM. The active site involves Asp-926. Residue Cys-979 is the Nucleophile of the active site.

It belongs to the peptidase C48 family.

The protein localises to the cytoplasm. Its function is as follows. Protease that acts as a positive regulator of the cGAS-STING pathway by catalyzing desumoylation of CGAS. Desumoylation of CGAS promotes DNA-binding activity of CGAS, subsequent oligomerization and activation. Deconjugates SUMO2 and SUMO3 from targeted proteins, but not SUMO1. Catalyzes the deconjugation of poly-SUMO2 and poly-SUMO3 chains. Has very low efficiency in processing full-length SUMO proteins to their mature forms. This chain is Sentrin-specific protease 7 (Senp7), found in Rattus norvegicus (Rat).